A 132-amino-acid chain; its full sequence is Small ribosomal subunit protein uS8 (132 aa).

The protein belongs to the universal ribosomal protein uS8 family. Part of the 30S ribosomal subunit. Contacts proteins S5 and S12.

Functionally, one of the primary rRNA binding proteins, it binds directly to 16S rRNA central domain where it helps coordinate assembly of the platform of the 30S subunit. The sequence is that of Small ribosomal subunit protein uS8 from Exiguobacterium sibiricum (strain DSM 17290 / CCUG 55495 / CIP 109462 / JCM 13490 / 255-15).